The chain runs to 394 residues: Glycerol-3-phosphate dehydrogenase [NAD(+)] 2 (394 aa).

NAD(+) contacts are provided by residues 41 to 46, lysine 152, and alanine 185; that span reads GSGNWG. Lysine 152 contributes to the substrate binding site. Lysine 243 serves as the catalytic Proton acceptor. Positions 308 and 337 each coordinate NAD(+). 308-309 is a substrate binding site; it reads RN.

The protein belongs to the NAD-dependent glycerol-3-phosphate dehydrogenase family.

The catalysed reaction is sn-glycerol 3-phosphate + NAD(+) = dihydroxyacetone phosphate + NADH + H(+). This chain is Glycerol-3-phosphate dehydrogenase [NAD(+)] 2 (gpd2), found in Cyberlindnera jadinii (Torula yeast).